Consider the following 245-residue polypeptide: Purine nucleoside phosphorylase (245 aa).

Residue His-7 coordinates a purine D-ribonucleoside. Phosphate-binding positions include 23 to 27 (GDPGR), Arg-45, and 88 to 91 (RAGS). An a purine D-ribonucleoside-binding site is contributed by 183-184 (ME). Catalysis depends on Asp-206, which acts as the Proton donor.

It belongs to the PNP/MTAP phosphorylase family. As to quaternary structure, homohexamer; trimer of homodimers.

It catalyses the reaction inosine + phosphate = alpha-D-ribose 1-phosphate + hypoxanthine. The catalysed reaction is guanosine + phosphate = alpha-D-ribose 1-phosphate + guanine. The enzyme catalyses 2'-deoxyguanosine + phosphate = 2-deoxy-alpha-D-ribose 1-phosphate + guanine. It carries out the reaction 2'-deoxyinosine + phosphate = 2-deoxy-alpha-D-ribose 1-phosphate + hypoxanthine. It catalyses the reaction S-methyl-5'-thioinosine + phosphate = 5-(methylsulfanyl)-alpha-D-ribose 1-phosphate + hypoxanthine. The protein operates within purine metabolism; purine nucleoside salvage. With respect to regulation, inhibited by Immucillin-H and 5'-methylthio-Immucillin-H. Inhibited by 5'-deaza-1'-aza-2c-deoxy-1'-(9-methylene)-Immucilin-G (DADMe-ImmG). Functionally, as part of the purine salvage pathway, catalyzes the phosphorolytic breakdown of the N-glycosidic bond in the beta-(deoxy)ribonucleoside molecules, with the formation of the corresponding free purine bases and pentose-1-phosphate. Preferentially acts on inosine and guanosine, and to a lesser extent on 2'-deoxyguanosine and guanosine. Also catalyzes the phosphorylation of S-methyl-5'-thioinosine (MTI) to hypoxanthine; MTI is produced by adenosine deaminase (ADA)-mediated breakdown of S-methyl-5'-thioadenosine (MTA), a major by-product of polyamine biosynthesis. Generates hypoxanthine from both the purine salvage pathway and from polyamine metabolism which is required for nucleic acids synthesis. Has no activity towards adenosine. The chain is Purine nucleoside phosphorylase from Plasmodium falciparum (isolate 3D7).